We begin with the raw amino-acid sequence, 107 residues long: Disintegrin lebestatin (107 aa).

Positions 1 to 20 (MIQVLLVIICLAVFPFQGSS) are cleaved as a signal peptide. A propeptide spanning residues 21–64 (KTLKSGNVNDYEVVNPGTVTGLPKGAVEEKHEPMKGNTLQKFPL) is cleaved from the precursor. Cystine bridges form between Cys-65–Cys-74, Cys-70–Cys-93, Cys-71–Cys-98, and Cys-83–Cys-100. Positions 65–105 (CTTGPCCRQCKLKPAGTTCWKTSRTSHYCTGKSCDCPSYPG) constitute a Disintegrin domain. The Cell attachment site; atypical (KTS) signature appears at 85–87 (KTS). Residues 106–107 (NG) constitute a propeptide that is removed on maturation.

In terms of assembly, monomer. As to expression, expressed by the venom gland.

The protein localises to the secreted. Its function is as follows. Specifically interacts with the alpha-1/beta-1 integrin (ITGA1/ITGB1). Exhibits highly inhibitory effects on cell adhesion and cell migration to collagens I and IV. Also shows in vivo anti-angiogenic activity. The protein is Disintegrin lebestatin of Macrovipera lebetinus (Levantine viper).